The following is a 110-amino-acid chain: Nucleoid-associated protein YE3092 (110 aa).

This sequence belongs to the YbaB/EbfC family. As to quaternary structure, homodimer.

It localises to the cytoplasm. The protein localises to the nucleoid. Functionally, binds to DNA and alters its conformation. May be involved in regulation of gene expression, nucleoid organization and DNA protection. This is Nucleoid-associated protein YE3092 from Yersinia enterocolitica serotype O:8 / biotype 1B (strain NCTC 13174 / 8081).